We begin with the raw amino-acid sequence, 164 residues long: Small ribosomal subunit protein uS5 (164 aa).

The S5 DRBM domain maps to 10–73 (IEERVVAINR…ESAKKNMIEV (64 aa)).

The protein belongs to the universal ribosomal protein uS5 family. As to quaternary structure, part of the 30S ribosomal subunit. Contacts proteins S4 and S8.

In terms of biological role, with S4 and S12 plays an important role in translational accuracy. Functionally, located at the back of the 30S subunit body where it stabilizes the conformation of the head with respect to the body. This Streptococcus suis (strain 98HAH33) protein is Small ribosomal subunit protein uS5.